Reading from the N-terminus, the 395-residue chain is ATP-dependent RNA helicase eIF4A (395 aa).

The residue at position 2 (serine 2) is an N-acetylserine. The Q motif motif lies at 22–50 (YKFDDMELDENLLRGVFGYGFEEPSAIQQ). One can recognise a Helicase ATP-binding domain in the interval 53–222 (IMPIIEGHDV…TKFMRNPVRI (170 aa)). 66–73 (AQSGTGKT) contributes to the ATP binding site. Residue threonine 73 is modified to Phosphothreonine. Serine 77 and serine 129 each carry phosphoserine. Residue threonine 146 is modified to Phosphothreonine. Positions 170-173 (DEAD) match the DEAD box motif. Residues 233-394 (GIKQFYVNVE…ELPSDIATLL (162 aa)) enclose the Helicase C-terminal domain.

It belongs to the DEAD box helicase family. eIF4A subfamily. As to quaternary structure, component of the eIF4F complex, which composition varies with external and internal environmental conditions. It is composed of at least eIF4A, eIF4E and eIF4G.

The protein resides in the cytoplasm. The catalysed reaction is ATP + H2O = ADP + phosphate + H(+). Functionally, ATP-dependent RNA helicase which is a subunit of the eIF4F complex involved in cap recognition and is required for mRNA binding to ribosome. In the current model of translation initiation, eIF4A unwinds RNA secondary structures in the 5'-UTR of mRNAs which is necessary to allow efficient binding of the small ribosomal subunit, and subsequent scanning for the initiator codon. The chain is ATP-dependent RNA helicase eIF4A (TIF1) from Saccharomyces cerevisiae (strain YJM789) (Baker's yeast).